A 157-amino-acid polypeptide reads, in one-letter code: Protein Smg homolog (157 aa).

This sequence belongs to the Smg family.

This Aliivibrio fischeri (strain ATCC 700601 / ES114) (Vibrio fischeri) protein is Protein Smg homolog.